Consider the following 561-residue polypeptide: Putative transport protein YbjL (561 aa).

Helical transmembrane passes span 8-28 (LLNG…LCLG), 32-52 (LGSV…LLGQ), 66-86 (FMLF…SIFF), 94-114 (MLAL…GKLF), and 158-178 (NLSL…IVGA). RCK C-terminal domains are found at residues 200–288 (RGLD…SFRN) and 292–373 (VFDR…RIGF). 5 helical membrane passes run 383-403 (LLAF…TFQF), 406-426 (FSFG…LGFL), 447-467 (FGLM…ISNG), 475-495 (MLIA…LFGA), and 540-560 (AIAN…WPGL).

This sequence belongs to the AAE transporter (TC 2.A.81) family. YbjL subfamily.

The protein resides in the cell membrane. The protein is Putative transport protein YbjL of Salmonella typhi.